The sequence spans 605 residues: Elongation factor 4 (605 aa).

Residues 4-181 (NKIKTFSIIA…AIVEYVPSPL (178 aa)) enclose the tr-type G domain. Residues 16 to 21 (DHGKST) and 128 to 131 (NKVD) contribute to the GTP site.

It belongs to the TRAFAC class translation factor GTPase superfamily. Classic translation factor GTPase family. LepA subfamily.

It is found in the cell membrane. It carries out the reaction GTP + H2O = GDP + phosphate + H(+). Functionally, required for accurate and efficient protein synthesis under certain stress conditions. May act as a fidelity factor of the translation reaction, by catalyzing a one-codon backward translocation of tRNAs on improperly translocated ribosomes. Back-translocation proceeds from a post-translocation (POST) complex to a pre-translocation (PRE) complex, thus giving elongation factor G a second chance to translocate the tRNAs correctly. Binds to ribosomes in a GTP-dependent manner. This is Elongation factor 4 from Mycoplasmopsis synoviae (strain 53) (Mycoplasma synoviae).